Here is a 320-residue protein sequence, read N- to C-terminus: uncharacterized protein (320 aa).

An N-terminal signal peptide occupies residues 1-23 (MKLNLRFPSYFLPVVAASAFLVS). Residue C24 is the site of N-palmitoyl cysteine attachment. A lipid anchor (S-diacylglycerol cysteine) is attached at C24. The interval 160–181 (KNHEHGHTHKNGETHEHDHDHH) is disordered.

Its subcellular location is the cell membrane. This is an uncharacterized protein from Mycoplasma pneumoniae (strain ATCC 29342 / M129 / Subtype 1) (Mycoplasmoides pneumoniae).